The sequence spans 152 residues: Phosphoribosyl-AMP cyclohydrolase (152 aa).

Residue Asp92 coordinates Mg(2+). Cys93 contacts Zn(2+). Positions 94 and 96 each coordinate Mg(2+). Positions 111 and 118 each coordinate Zn(2+).

The protein belongs to the PRA-CH family. As to quaternary structure, homodimer. It depends on Mg(2+) as a cofactor. Zn(2+) serves as cofactor.

The protein resides in the cytoplasm. It catalyses the reaction 1-(5-phospho-beta-D-ribosyl)-5'-AMP + H2O = 1-(5-phospho-beta-D-ribosyl)-5-[(5-phospho-beta-D-ribosylamino)methylideneamino]imidazole-4-carboxamide. It participates in amino-acid biosynthesis; L-histidine biosynthesis; L-histidine from 5-phospho-alpha-D-ribose 1-diphosphate: step 3/9. Its function is as follows. Catalyzes the hydrolysis of the adenine ring of phosphoribosyl-AMP. This chain is Phosphoribosyl-AMP cyclohydrolase, found in Sinorhizobium fredii (strain NBRC 101917 / NGR234).